Consider the following 171-residue polypeptide: Neuronal vesicle trafficking-associated protein 2 (171 aa).

The disordered stretch occupies residues 1 to 21 (MVKLNGNPGEKGAKPPSVEDG). Topologically, residues 1–71 (MVKLNGNPGE…FRVPKIAEFT (71 aa)) are cytoplasmic. A helical; Signal-anchor for type II membrane protein membrane pass occupies residues 72–92 (VTILVSLALAFLACIVFLVVY). Residues 93–171 (KAFTYDHSCP…EPKPPKTQGH (79 aa)) are Lumenal-facing.

Belongs to the NSG family.

It localises to the membrane. Its subcellular location is the golgi apparatus. The protein resides in the trans-Golgi network membrane. It is found in the cell projection. The protein localises to the dendrite. It localises to the endosome membrane. Its subcellular location is the early endosome membrane. The protein resides in the late endosome membrane. It is found in the lysosome lumen. The protein localises to the cytoplasmic vesicle membrane. It localises to the golgi stack membrane. Its subcellular location is the endosome. The protein resides in the multivesicular body membrane. The polypeptide is Neuronal vesicle trafficking-associated protein 2 (Rattus norvegicus (Rat)).